Here is a 517-residue protein sequence, read N- to C-terminus: ATP synthase subunit alpha (517 aa).

174–181 (GDRQTGKT) serves as a coordination point for ATP.

It belongs to the ATPase alpha/beta chains family. As to quaternary structure, F-type ATPases have 2 components, CF(1) - the catalytic core - and CF(0) - the membrane proton channel. CF(1) has five subunits: alpha(3), beta(3), gamma(1), delta(1), epsilon(1). CF(0) has three main subunits: a(1), b(2) and c(9-12). The alpha and beta chains form an alternating ring which encloses part of the gamma chain. CF(1) is attached to CF(0) by a central stalk formed by the gamma and epsilon chains, while a peripheral stalk is formed by the delta and b chains.

Its subcellular location is the cell inner membrane. It catalyses the reaction ATP + H2O + 4 H(+)(in) = ADP + phosphate + 5 H(+)(out). Produces ATP from ADP in the presence of a proton gradient across the membrane. The alpha chain is a regulatory subunit. The sequence is that of ATP synthase subunit alpha from Polaromonas sp. (strain JS666 / ATCC BAA-500).